Consider the following 142-residue polypeptide: SsrA-binding protein (142 aa).

This sequence belongs to the SmpB family.

It localises to the cytoplasm. Its function is as follows. Required for rescue of stalled ribosomes mediated by trans-translation. Binds to transfer-messenger RNA (tmRNA), required for stable association of tmRNA with ribosomes. tmRNA and SmpB together mimic tRNA shape, replacing the anticodon stem-loop with SmpB. tmRNA is encoded by the ssrA gene; the 2 termini fold to resemble tRNA(Ala) and it encodes a 'tag peptide', a short internal open reading frame. During trans-translation Ala-aminoacylated tmRNA acts like a tRNA, entering the A-site of stalled ribosomes, displacing the stalled mRNA. The ribosome then switches to translate the ORF on the tmRNA; the nascent peptide is terminated with the 'tag peptide' encoded by the tmRNA and targeted for degradation. The ribosome is freed to recommence translation, which seems to be the essential function of trans-translation. The polypeptide is SsrA-binding protein (Mycoplasma mobile (strain ATCC 43663 / 163K / NCTC 11711) (Mesomycoplasma mobile)).